The following is a 68-amino-acid chain: DNA-directed RNA polymerase subunit Rpo10 (68 aa).

Zn(2+) contacts are provided by cysteine 7, cysteine 10, cysteine 44, and cysteine 45.

Belongs to the archaeal Rpo10/eukaryotic RPB10 RNA polymerase subunit family. Part of the RNA polymerase complex. Zn(2+) is required as a cofactor.

The protein resides in the cytoplasm. The catalysed reaction is RNA(n) + a ribonucleoside 5'-triphosphate = RNA(n+1) + diphosphate. Its function is as follows. DNA-dependent RNA polymerase (RNAP) catalyzes the transcription of DNA into RNA using the four ribonucleoside triphosphates as substrates. The polypeptide is DNA-directed RNA polymerase subunit Rpo10 (Methanococcus maripaludis (strain C5 / ATCC BAA-1333)).